A 705-amino-acid polypeptide reads, in one-letter code: Lethal(3)malignant brain tumor-like protein 2 (705 aa).

The disordered stretch occupies residues 1–84 (MEKPPSIEET…GTPRSLDGSG (84 aa)). Ser13 carries the phosphoserine modification. A compositionally biased stretch (acidic residues) spans 15 to 25 (PMEEEEDDDLE). The span at 38–49 (SSVGSESSSYLE) shows a compositional bias: low complexity. A compositionally biased stretch (acidic residues) spans 50–60 (ESSEAENEDRE). Position 67 is a phosphoserine (Ser67). Thr76 carries the post-translational modification Phosphothreonine. The FCS-type zinc-finger motif lies at 81 to 116 (DGSGSEPAVCEMCGIVGTREAFFSKTKRFCSVSCSR). Positions 90, 93, 110, and 114 each coordinate Zn(2+). MBT repeat units follow at residues 179 to 283 (FDWG…LVPP), 291 to 391 (TDWK…IKMS), 397 to 500 (MAHH…LTPP), and 508 to 604 (FNWE…LQPP). Ser338 carries the phosphoserine modification. Lys405 participates in a covalent cross-link: Glycyl lysine isopeptide (Lys-Gly) (interchain with G-Cter in SUMO2). Residues 608 to 705 (EPATPLKAKE…VENIKQETDD (98 aa)) form a disordered region. Residues 619 to 634 (TKKKKKQFGKKRKRIP) show a composition bias toward basic residues. Residues Lys647, Lys659, and Lys675 each participate in a glycyl lysine isopeptide (Lys-Gly) (interchain with G-Cter in SUMO2) cross-link. Ser683, Ser688, and Ser689 each carry phosphoserine. Lys700 is covalently cross-linked (Glycyl lysine isopeptide (Lys-Gly) (interchain with G-Cter in SUMO1); alternate). Lys700 is covalently cross-linked (Glycyl lysine isopeptide (Lys-Gly) (interchain with G-Cter in SUMO2); alternate).

In terms of assembly, part of the E2F6.com-1 complex in G0 phase composed of E2F6, MGA, MAX, TFDP1, CBX3, BAT8, EUHMTASE1, RING1, RNF2, MBLR, BAT8 and YAF2.

The protein localises to the nucleus. Its function is as follows. Putative Polycomb group (PcG) protein. PcG proteins maintain the transcriptionally repressive state of genes, probably via a modification of chromatin, rendering it heritably changed in its expressibility. Its association with a chromatin-remodeling complex suggests that it may contribute to prevent expression of genes that trigger the cell into mitosis. Binds to monomethylated and dimethylated 'Lys-20' on histone H4. Binds histone H3 peptides that are monomethylated or dimethylated on 'Lys-4', 'Lys-9' or 'Lys-27'. In Pongo abelii (Sumatran orangutan), this protein is Lethal(3)malignant brain tumor-like protein 2 (L3MBTL2).